We begin with the raw amino-acid sequence, 439 residues long: Proline--tRNA ligase (439 aa).

This sequence belongs to the class-II aminoacyl-tRNA synthetase family. ProS type 2 subfamily. Homodimer.

The protein resides in the cytoplasm. It catalyses the reaction tRNA(Pro) + L-proline + ATP = L-prolyl-tRNA(Pro) + AMP + diphosphate. Its function is as follows. Catalyzes the attachment of proline to tRNA(Pro) in a two-step reaction: proline is first activated by ATP to form Pro-AMP and then transferred to the acceptor end of tRNA(Pro). This chain is Proline--tRNA ligase, found in Hyphomonas neptunium (strain ATCC 15444).